A 570-amino-acid chain; its full sequence is PTS system lactose-specific EIICB component (570 aa).

A PTS EIIC type-3 domain is found at 9-410; the sequence is IEKGKPFFEK…VVDIIIYYPF (402 aa). 9 consecutive transmembrane segments (helical) span residues 31–51, 65–85, 104–124, 133–153, 178–198, 223–243, 283–303, 340–360, and 382–402; these read GFISAMPVILFSSIFLLIAYV, AILMKPYNYTMGLVAFLVAGT, INFISTMQAAMCGFLFLASDP, AFMGTKGLLTAFLSAFVTVIV, FKDLIPFSAVIIILYALDLVI, GWIGVTIIFGAFALFWFVGIH, MFIVTFGGTGATLVVPFMFMW, VFFIPFVLAPIVNVWIFKLFV, and IIMGTGFGLWSFVLAITLIVV. The PTS EIIB type-3 domain occupies 467 to 570; sequence QTNVLVLCAG…LDFVQQQFEN (104 aa). Cys474 functions as the Phosphocysteine intermediate; for EIIB activity in the catalytic mechanism. Position 474 is a phosphocysteine; by EIIA (Cys474).

The protein localises to the cell membrane. It catalyses the reaction lactose(out) + N(pros)-phospho-L-histidyl-[protein] = lactose 6-phosphate(in) + L-histidyl-[protein]. In terms of biological role, the phosphoenolpyruvate-dependent sugar phosphotransferase system (sugar PTS), a major carbohydrate active transport system, catalyzes the phosphorylation of incoming sugar substrates concomitantly with their translocation across the cell membrane. The enzyme II LacEF PTS system is involved in lactose transport, but can also use galactose, isopropyl beta-thio-galactopyranoside and thiomethyl beta-D-galactopyranoside (TMG) as substrates. In Staphylococcus aureus, this protein is PTS system lactose-specific EIICB component.